The primary structure comprises 248 residues: tRNA (guanine-N(1)-)-methyltransferase (248 aa).

Residues Gly-113 and 133–138 (IGDYVL) each bind S-adenosyl-L-methionine.

It belongs to the RNA methyltransferase TrmD family. As to quaternary structure, homodimer.

The protein localises to the cytoplasm. It carries out the reaction guanosine(37) in tRNA + S-adenosyl-L-methionine = N(1)-methylguanosine(37) in tRNA + S-adenosyl-L-homocysteine + H(+). Functionally, specifically methylates guanosine-37 in various tRNAs. The chain is tRNA (guanine-N(1)-)-methyltransferase from Shewanella halifaxensis (strain HAW-EB4).